A 714-amino-acid polypeptide reads, in one-letter code: Nucleolin (714 aa).

The interval 1–303 (MVKLAKAGKT…AKKQKVEGSE (303 aa)) is disordered. N6-acetyllysine occurs at positions 9, 15, and 16. The segment covering 24-42 (VEEDSEDEEMSEEEDDSSG) has biased composition (acidic residues). Phosphoserine is present on residues Ser-28, Ser-34, Ser-40, and Ser-41. Over residues 55–106 (ATATPAKKVVVSQTKKVAVPTPAKKAAVTPGKKAAATPAKKAVTPAKAVATP) the composition is skewed to low complexity. Residues 57–64 (ATPAKKVV) form repeat 1. Residues 57–134 (ATPAKKVVVS…GAVTPAKGAK (78 aa)) are 8 X 8 AA tandem repeats of X-T-P-X-K-K-X-X. Phosphoserine is present on Ser-66. A phosphothreonine mark is found at Thr-68, Thr-75, Thr-83, and Thr-91. Tandem repeats lie at residues 74-81 (PTPAKKAA), 82-89 (VTPGKKAA), and 90-97 (ATPAKKAV). The residue at position 95 (Lys-95) is an N6-acetyllysine. A Phosphothreonine modification is found at Thr-98. A 5; truncated repeat occupies 98–103 (TPAKAV). Lys-101 bears the N6-acetyllysine mark. Residues 104–111 (ATPGKKGA) form repeat 6. A Phosphothreonine modification is found at Thr-105. N6-acetyllysine is present on Lys-108. At Thr-112 the chain carries Phosphothreonine. The residue at position 115 (Lys-115) is an N6-acetyllysine. 2 tandem repeats follow at residues 119–126 (ATPGKKGA) and 127–134 (VTPAKGAK). Thr-120 carries the post-translational modification Phosphothreonine. Residue Lys-123 is modified to N6-acetyllysine. Phosphoserine occurs at positions 144 and 157. Residues 144–170 (SDEDEDDDDDEDDSDEDEEDEEEDEFE) are compositionally biased toward acidic residues. Low complexity predominate over residues 171 to 187 (PPVVKGKQGKVAAAAPA). The residue at position 188 (Ser-188) is a Phosphoserine. The segment covering 188–216 (SEDEDEEEDEEEEEEDEEEEDDSEEEEAM) has biased composition (acidic residues). Thr-219 is subject to Phosphothreonine. The span at 240–272 (EEDDDDEEEDEDEEEDEEEEEDEEEEEEEEEEE) shows a compositional bias: acidic residues. The segment covering 285-301 (MTKQKEVPEAKKQKVEG) has biased composition (basic and acidic residues). Lys-298 participates in a covalent cross-link: Glycyl lysine isopeptide (Lys-Gly) (interchain with G-Cter in SUMO1); alternate. Lys-298 participates in a covalent cross-link: Glycyl lysine isopeptide (Lys-Gly) (interchain with G-Cter in SUMO2); alternate. Ser-302 bears the Phosphoserine mark. RRM domains are found at residues 308–384 (FNLF…KPKG) and 394–467 (RTLL…YTGE). Lys-319 carries the N6-acetyllysine modification. Lys-325 participates in a covalent cross-link: Glycyl lysine isopeptide (Lys-Gly) (interchain with G-Cter in SUMO1); alternate. Lys-325 is covalently cross-linked (Glycyl lysine isopeptide (Lys-Gly) (interchain with G-Cter in SUMO2); alternate). Lys-349 bears the N6-acetyllysine mark. Ser-357 carries the post-translational modification Phosphoserine. Thr-368 carries the post-translational modification Phosphothreonine. Lys-371 is covalently cross-linked (Glycyl lysine isopeptide (Lys-Gly) (interchain with G-Cter in SUMO2)). Lys-378 participates in a covalent cross-link: Glycyl lysine isopeptide (Lys-Gly) (interchain with G-Cter in SUMO2); alternate. Lys-378 carries the N6-acetyllysine; alternate modification. An N6-acetyllysine modification is found at Lys-399. Ser-402 carries the post-translational modification Phosphoserine. A Phosphothreonine modification is found at Thr-406. N6-acetyllysine is present on residues Lys-428 and Lys-445. Residues Ser-459 and Ser-461 each carry the phosphoserine modification. N6-acetyllysine occurs at positions 468 and 477. The 75-residue stretch at 486–560 (KTLVLSNLSY…RTIRLELQGP (75 aa)) folds into the RRM 3 domain. Residue Lys-513 forms a Glycyl lysine isopeptide (Lys-Gly) (interchain with G-Cter in SUMO2); alternate linkage. The residue at position 513 (Lys-513) is an N6-acetyllysine; alternate. An N6-acetyllysine modification is found at Lys-521. Position 563 is a phosphoserine (Ser-563). N6-acetyllysine is present on Lys-572. The RRM 4 domain maps to 572–647 (KTLFVKGLSE…NKVTLDWAKP (76 aa)). Residue Lys-577 forms a Glycyl lysine isopeptide (Lys-Gly) (interchain with G-Cter in SUMO2); alternate linkage. The residue at position 577 (Lys-577) is an N6-acetyllysine; alternate. At Ser-580 the chain carries Phosphoserine. Lys-589 participates in a covalent cross-link: Glycyl lysine isopeptide (Lys-Gly) (interchain with G-Cter in SUMO1); alternate. Lys-589 is covalently cross-linked (Glycyl lysine isopeptide (Lys-Gly) (interchain with G-Cter in SUMO2); alternate). Residues Ser-591 and Ser-619 each carry the phosphoserine modification. A Glycyl lysine isopeptide (Lys-Gly) (interchain with G-Cter in SUMO2) cross-link involves residue Lys-624. Positions 642–714 (LDWAKPKGEG…KPQGKKTKFE (73 aa)) are disordered. The residue at position 646 (Lys-646) is an N6-acetyllysine. The span at 650 to 703 (EGGFGGRGGGRGGFGGRGGGRGGGRGGFGGRGRGGFGGRGGFRGGRGGGGGGGD) shows a compositional bias: gly residues. An asymmetric dimethylarginine mark is found at Arg-656, Arg-660, Arg-666, Arg-670, Arg-674, Arg-680, Arg-682, Arg-688, and Arg-692. Asymmetric dimethylarginine; alternate is present on Arg-695. Arg-695 carries the omega-N-methylarginine; alternate modification.

Identified in a IGF2BP1-dependent mRNP granule complex containing untranslated mRNAs. Component of the SWAP complex that consists of NPM1, NCL/nucleolin, PARP1 and SWAP70. Component of a complex which is at least composed of HTATSF1/Tat-SF1, the P-TEFb complex components CDK9 and CCNT1, RNA polymerase II, SUPT5H, and NCL/nucleolin. Interacts with AICDA. Interacts with APTX. Interacts with C1QBP. Interacts with ERBB4. Interacts (via C-terminus) with FMR1 isoform 6 (via N-terminus). Interacts with GZF1; this interaction is important for nucleolar localization of GZF1. Interacts with NSUN2. Interacts with NVL. Interacts (via N-terminus domain) with SETX. Interacts (via RRM1 and C-terminal RRM4/Arg/Gly-rich domains) with TERT; the interaction is important for nucleolar localization of TERT. Interacts with WDR46. Interacts with ZFP36. Interacts with LRRC34. Interacts with RRP1B. Interacts with HNRNPU; this interaction occurs during mitosis. Interacts with RIOK1; RIOK1 recruits NCL to PRMT5 for symmetrically methylation. Interacts with ZBTB7B. Interacts with MDK; this interaction promotes NCL clustering and lateral movements of this complex into lipid rafts leading to MDK internalization. Interacts with HDGF. Interacts with ALKBH2. Interacts with IGFBP5; this interaction is necessary for IGFBP5 localization to the nucleus. Interacts with DDX24 (when ubiquitinated); this interaction may be important during ribosome biogenesis. Some glutamate residues are glycylated by TTLL8. This modification occurs exclusively on glutamate residues and results in a glycine chain on the gamma-carboxyl group. Post-translationally, symmetrically methylated by PRMT5.

Its subcellular location is the nucleus. The protein localises to the nucleolus. It is found in the cytoplasm. Nucleolin is the major nucleolar protein of growing eukaryotic cells. It is found associated with intranucleolar chromatin and pre-ribosomal particles. It induces chromatin decondensation by binding to histone H1. It is thought to play a role in pre-rRNA transcription and ribosome assembly. May play a role in the process of transcriptional elongation. Binds RNA oligonucleotides with 5'-UUAGGG-3' repeats more tightly than the telomeric single-stranded DNA 5'-TTAGGG-3' repeats. The polypeptide is Nucleolin (NCL) (Mesocricetus auratus (Golden hamster)).